Consider the following 865-residue polypeptide: DNA topoisomerase 1 (865 aa).

The region spanning 3–142 (KALVIVESPA…RYSRVVFNEI (140 aa)) is the Toprim domain. Glu9 provides a ligand contact to Mg(2+). The tract at residues 37 to 65 (LPTSGSAAKKSADSTSTKTAKKPKKDERG) is disordered. Low complexity predominate over residues 39–54 (TSGSAAKKSADSTSTK). Residue Asp111 coordinates Mg(2+). A Topo IA-type catalytic domain is found at 158 to 575 (NINRVNAQQA…NFFSDFTQQL (418 aa)). The segment at 192 to 197 (SAGRVQ) is interaction with DNA. The active-site O-(5'-phospho-DNA)-tyrosine intermediate is the Tyr319. C4-type zinc fingers lie at residues 599–630 (CPTC…KERC), 662–689 (CQKC…NPTC), and 711–736 (CEKC…NDEC).

It belongs to the type IA topoisomerase family. In terms of assembly, monomer. Mg(2+) is required as a cofactor.

It catalyses the reaction ATP-independent breakage of single-stranded DNA, followed by passage and rejoining.. Functionally, releases the supercoiling and torsional tension of DNA, which is introduced during the DNA replication and transcription, by transiently cleaving and rejoining one strand of the DNA duplex. Introduces a single-strand break via transesterification at a target site in duplex DNA. The scissile phosphodiester is attacked by the catalytic tyrosine of the enzyme, resulting in the formation of a DNA-(5'-phosphotyrosyl)-enzyme intermediate and the expulsion of a 3'-OH DNA strand. The free DNA strand then undergoes passage around the unbroken strand, thus removing DNA supercoils. Finally, in the religation step, the DNA 3'-OH attacks the covalent intermediate to expel the active-site tyrosine and restore the DNA phosphodiester backbone. The protein is DNA topoisomerase 1 of Salmonella typhimurium (strain LT2 / SGSC1412 / ATCC 700720).